The following is a 436-amino-acid chain: Trigger factor (436 aa).

The 86-residue stretch at 161-246 (DDRVTVDFVG…VNKVEGLSLP (86 aa)) folds into the PPIase FKBP-type domain.

It belongs to the FKBP-type PPIase family. Tig subfamily.

It is found in the cytoplasm. It catalyses the reaction [protein]-peptidylproline (omega=180) = [protein]-peptidylproline (omega=0). Functionally, involved in protein export. Acts as a chaperone by maintaining the newly synthesized protein in an open conformation. Functions as a peptidyl-prolyl cis-trans isomerase. This Pseudoalteromonas atlantica (strain T6c / ATCC BAA-1087) protein is Trigger factor.